A 1378-amino-acid polypeptide reads, in one-letter code: Cell surface hyaluronidase (1378 aa).

The disordered stretch occupies residues 1-77 (MQVNDGPSSH…GNRREQAQNQ (77 aa)). Residues 1 to 82 (MQVNDGPSSH…QAQNQQRKNT (82 aa)) lie on the Cytoplasmic side of the membrane. Pro residues predominate over residues 36–58 (RSPPPAKAPPPPPLKPPVPPPAR). A helical; Signal-anchor for type II membrane protein transmembrane segment spans residues 83 to 103 (YICVGIFFGIFLLILILVLSL). At 104-1378 (TSKDVLDENC…MDLELLKKIS (1275 aa)) the chain is on the extracellular side. In terms of domain architecture, G8 spans 121–247 (RSWKPGHDLK…ERMSWTFLTR (127 aa)). 5 N-linked (GlcNAc...) asparagine glycosylation sites follow: Asn171, Asn264, Asn360, Asn527, and Asn639. The region spanning 257-414 (GDHAFQKNFS…YPTTGFQVDA (158 aa)) is the GG-type lectin 1 domain. Residues 672–694 (HPNNHLISNSAAGSQDAGIWYVF) form a PbH1 1 repeat. N-linked (GlcNAc...) asparagine glycosylation is present at Asn696. The stretch at 714–736 (TPLGTFFNNRVHSNFKAGLFIDR) is one PbH1 2 repeat. Residues Asn742, Asn854, Asn905, Asn996, Asn1069, Asn1160, and Asn1221 are each glycosylated (N-linked (GlcNAc...) asparagine). The region spanning 1203 to 1363 (NSYLQTQIKS…LEEYSCPPKK (161 aa)) is the GG-type lectin 2 domain.

The protein belongs to the CEMIP family. It depends on Ca(2+) as a cofactor.

It is found in the cell membrane. It catalyses the reaction Random hydrolysis of (1-&gt;4)-linkages between N-acetyl-beta-D-glucosamine and D-glucuronate residues in hyaluronate.. Cell surface hyaluronidase that mediates the initial cleavage of extracellular high-molecular-weight hyaluronan into intermediate-size hyaluronan. Acts as a regulator of angiogenesis in embryos by mediating degradation of extracellular hyaluronan, thereby promoting VEGF signaling. Acts as a regulator of heart development during myocardial and endocardial morphogenesis: involved in the looping stage of heart morphogenesis. Stimulates migration of endocardial cells and increases both myocardial and endocardial fusion. Involved in the restriction of endocardial cushions (ECs) formation to the atrioventricular canal (AVC). Also required for muscle fiber attachment. Is very specific to hyaluronan; not able to cleave chondroitin sulfate or dermatan sulfate. The chain is Cell surface hyaluronidase (cemip2) from Danio rerio (Zebrafish).